A 487-amino-acid chain; its full sequence is Keratin, type I cytoskeletal 12 (487 aa).

The segment at 1-118 is head; it reads MSLSVCTSAL…GNDGGLLSGS (118 aa). A coil 1A region spans residues 119–154; sequence EKETMQNLNDRLASYLGKVRSLEEANAELENKIREW. The IF rod domain occupies 119–433; the sequence is EKETMQNLND…RLLEGDSQGD (315 aa). Residues 158–175 form a linker 1 region; that stretch reads RRTRDAGSQSDYSKYYPL. Positions 176 to 267 are coil 1B; the sequence is IEDLKNKIVS…KNHEEELQSF (92 aa). A linker 12 region spans residues 268 to 290; sequence QAGGPGEVNVEMDAAPGVDLTKV. Residues 291–428 are coil 2; the sequence is LNEMRAQYEA…IETYRRLLEG (138 aa). The tract at residues 428 to 461 is disordered; that stretch reads GDSQGDGFDESSSLSVSKPQTPSVDSSKDPNKTR. The tract at residues 429–487 is tail; that stretch reads DSQGDGFDESSSLSVSKPQTPSVDSSKDPNKTRKIKTVVQEIVNGEVVSSQVQELEEEM. Over residues 437 to 452 the composition is skewed to polar residues; that stretch reads ESSSLSVSKPQTPSVD.

The protein belongs to the intermediate filament family. As to quaternary structure, heterotetramer of two type I and two type II keratins. Keratin-3 associates with keratin-12. As to expression, expressed in the corneal epithelium (at protein level). Also expressed in the suprabasal limbal epithelium of the cornea (at protein level).

Functionally, involved in corneal epithelium organization, integrity and corneal keratin expression. The polypeptide is Keratin, type I cytoskeletal 12 (Krt12) (Mus musculus (Mouse)).